The primary structure comprises 89 residues: MKEIILWPAYIDLKRTKNEGRKVPKEIAIQNPKLKEIASKIKKMGLEYSVENKKSYPKESWEICGYIKVKVDESTSKLQFLKEICINMK.

The protein belongs to the SRP19 family. In terms of assembly, part of the signal recognition particle protein translocation system, which is composed of SRP and FtsY. Archaeal SRP consists of a 7S RNA molecule of 300 nucleotides and two protein subunits: SRP54 and SRP19.

The protein localises to the cytoplasm. Functionally, involved in targeting and insertion of nascent membrane proteins into the cytoplasmic membrane. Binds directly to 7S RNA and mediates binding of the 54 kDa subunit of the SRP. The polypeptide is Signal recognition particle 19 kDa protein (Methanococcus maripaludis (strain DSM 14266 / JCM 13030 / NBRC 101832 / S2 / LL)).